We begin with the raw amino-acid sequence, 486 residues long: E3 ubiquitin-protein ligase TRIM50 (486 aa).

An RING-type zinc finger spans residues 16 to 57 (CPVCLEVFKEPLMLQCGHSYCKGCLLSLSRHLDSELRCPVCR). The segment at 84–125 (PEPQVCTHHRNPLSLFCEKDQELICGLCGLLGSHQHHRVTPV) adopts a B box-type zinc-finger fold. Zn(2+) is bound by residues Cys-89, His-92, Cys-111, and His-117. Coiled-coil stretches lie at residues 125 to 170 (VSTV…ESDV) and 204 to 235 (LVAS…FGNE). The 200-residue stretch at 275 to 474 (DIKLTVWKRL…LPMVLPLPSG (200 aa)) folds into the B30.2/SPRY domain. The residue at position 372 (Lys-372) is an N6-acetyllysine.

The protein belongs to the TRIM/RBCC family. In terms of assembly, can form dimers and trimers. Interacts with several E2 ubiquitin-conjugating enzymes, including UBE2L6, UBE2E1, UBE2E3. No interaction with UBE2H. Interacts with BECN1. Interacts with SQSTM1. Interacts with NLRP3. Post-translationally, auto-ubiquitinated. In terms of processing, acetylated by EP300 and KAT2B. HDAC6 drives TRIM50 deacetylation. Acetylation antagonizes with TRIM50 ubiquitination.

The protein localises to the cytoplasm. It carries out the reaction S-ubiquitinyl-[E2 ubiquitin-conjugating enzyme]-L-cysteine + [acceptor protein]-L-lysine = [E2 ubiquitin-conjugating enzyme]-L-cysteine + N(6)-ubiquitinyl-[acceptor protein]-L-lysine.. In terms of biological role, E3 ubiquitin-protein ligase that ubiquitinates Beclin-1/BECN1 in a 'Lys-63'-dependent manner enhancing its binding to ULK1. In turn, promotes starvation-induced autophagy activation. Also interacts with p62/SQSTM1 protein and thereby induces the formation and the autophagy clearance of aggresome-associated polyubiquitinated proteins through HDAC6 interaction. Also promotes NLRP3 inflammasome activation by directly inducing NLRP3 oligomerization independent of its E3 ligase function. The polypeptide is E3 ubiquitin-protein ligase TRIM50 (TRIM50) (Sus scrofa (Pig)).